Here is a 463-residue protein sequence, read N- to C-terminus: Glutamate--tRNA ligase 1 (463 aa).

The 'HIGH' region signature appears at 10 to 20 (PSPTGYLHIGG). Positions 238–242 (KLSKR) match the 'KMSKS' region motif. Residue K241 coordinates ATP.

This sequence belongs to the class-I aminoacyl-tRNA synthetase family. Glutamate--tRNA ligase type 1 subfamily. In terms of assembly, monomer.

The protein localises to the cytoplasm. It catalyses the reaction tRNA(Glu) + L-glutamate + ATP = L-glutamyl-tRNA(Glu) + AMP + diphosphate. Functionally, catalyzes the attachment of glutamate to tRNA(Glu) in a two-step reaction: glutamate is first activated by ATP to form Glu-AMP and then transferred to the acceptor end of tRNA(Glu). The chain is Glutamate--tRNA ligase 1 from Helicobacter pylori (strain HPAG1).